A 124-amino-acid polypeptide reads, in one-letter code: KETSAQKFERQHMDSTGSSSSSPTYCNQMMKRREMTQGYCKPVNTFVHEPLADVQAVCSQENVTCKNGNSNCYKSRSALHITDCRLKGNSKYPNCDYQTSQLQKQVIVACEGSPFVPVHFDASV.

The segment covering 1–13 (KETSAQKFERQHM) has biased composition (basic and acidic residues). The disordered stretch occupies residues 1-25 (KETSAQKFERQHMDSTGSSSSSPTY). Substrate is bound by residues Lys-7 and Arg-10. The Proton acceptor role is filled by His-12. Intrachain disulfides connect Cys-26/Cys-84, Cys-40/Cys-95, Cys-58/Cys-110, and Cys-65/Cys-72. Residues 41-45 (KPVNT), Lys-66, and Arg-85 each bind substrate. The active-site Proton donor is the His-119.

It belongs to the pancreatic ribonuclease family. As to quaternary structure, monomer. Interacts with and forms tight 1:1 complexes with RNH1. Dimerization of two such complexes may occur. Interaction with RNH1 inhibits this protein. In terms of tissue distribution, pancreas.

The protein resides in the secreted. The enzyme catalyses an [RNA] containing cytidine + H2O = an [RNA]-3'-cytidine-3'-phosphate + a 5'-hydroxy-ribonucleotide-3'-[RNA].. It catalyses the reaction an [RNA] containing uridine + H2O = an [RNA]-3'-uridine-3'-phosphate + a 5'-hydroxy-ribonucleotide-3'-[RNA].. Its function is as follows. Endonuclease that catalyzes the cleavage of RNA on the 3' side of pyrimidine nucleotides. Acts on single-stranded and double-stranded RNA. This is Ribonuclease pancreatic (RNASE1) from Ondatra zibethicus (Muskrat).